A 355-amino-acid polypeptide reads, in one-letter code: N-acylethanolamine-hydrolyzing acid amidase (355 aa).

An N-terminal signal peptide occupies residues 1 to 17; the sequence is MLLLQIILLLLPVICSA. The active-site Nucleophile is cysteine 122. 3 N-linked (GlcNAc...) asparagine glycosylation sites follow: asparagine 150, asparagine 160, and asparagine 328.

It belongs to the acid ceramidase family. As to quaternary structure, heterodimer of an alpha and a beta subunit, produced by autocatalytic cleavage. In terms of processing, N-glycosylated. Autoproteolytic cleavage at pH 4.5 gives rise to the alpha and beta subunit. Cleavage gives rise to a conformation change that activates the enzyme. The same catalytic Cys residue mediates the autoproteolytic cleavage and subsequent hydrolysis of lipid substrates.

It is found in the lysosome. It localises to the membrane. It catalyses the reaction N-hexadecanoylethanolamine + H2O = ethanolamine + hexadecanoate. The enzyme catalyses an N-(long-chain fatty acyl)ethanolamine + H2O = a long-chain fatty acid + ethanolamine. Its pathway is lipid metabolism; fatty acid metabolism. Degrades bioactive fatty acid amides, such as N-palmitoylethanolamine, to ethanolamine and free fatty acids. The chain is N-acylethanolamine-hydrolyzing acid amidase from Caenorhabditis elegans.